The chain runs to 1054 residues: Trehalose synthase complex regulatory subunit TPS3 (1054 aa).

Residues 112-133 form a disordered region; sequence AANSGIPPANNPVSSGSTAQRP. Residues 122-132 are compositionally biased toward polar residues; that stretch reads NPVSSGSTAQR. Phosphoserine is present on residues serine 148, serine 150, and serine 181. Disordered stretches follow at residues 155-203 and 223-250; these read ASSI…PVSK and QQQA…SSSN. The segment covering 170-182 has biased composition (polar residues); sequence LSSSLMKNPNLSF. Over residues 235–249 the composition is skewed to low complexity; the sequence is SGSTAGDSSIASSSS. Threonine 265 is subject to Phosphothreonine. Residues serine 267 and serine 273 each carry the phosphoserine modification. Positions 287-778 are glycosyltransferase; sequence KFGGYSNNAK…SNQETSTVFN (492 aa). Serine 960 carries the phosphoserine modification.

It in the N-terminal section; belongs to the glycosyltransferase 20 family. In terms of assembly, the trehalose synthase complex is composed of the two catalytic subunits TPS1 and TPS2 and at least one of the two regulatory subunits TPS3 or TSL1.

The protein resides in the cytoplasm. In terms of biological role, regulatory subunit of the trehalose synthase complex that catalyzes the production of trehalose from glucose-6-phosphate and UDP-glucose in a two step process. May stabilize the trehalose synthase complex. This Saccharomyces cerevisiae (strain ATCC 204508 / S288c) (Baker's yeast) protein is Trehalose synthase complex regulatory subunit TPS3 (TPS3).